A 118-amino-acid chain; its full sequence is Ribonuclease P protein component (118 aa).

The protein belongs to the RnpA family. In terms of assembly, consists of a catalytic RNA component (M1 or rnpB) and a protein subunit.

The catalysed reaction is Endonucleolytic cleavage of RNA, removing 5'-extranucleotides from tRNA precursor.. Its function is as follows. RNaseP catalyzes the removal of the 5'-leader sequence from pre-tRNA to produce the mature 5'-terminus. It can also cleave other RNA substrates such as 4.5S RNA. The protein component plays an auxiliary but essential role in vivo by binding to the 5'-leader sequence and broadening the substrate specificity of the ribozyme. The protein is Ribonuclease P protein component of Vibrio parahaemolyticus serotype O3:K6 (strain RIMD 2210633).